Consider the following 207-residue polypeptide: Ras-related protein RABH1d (207 aa).

Position 16–23 (16–23 (GDQSVGKT)) interacts with GTP. Residues 38 to 46 (YQATIGIDF) carry the Effector region motif. Residues 64 to 68 (DTAGQ), 122 to 125 (NKTD), and 152 to 153 (SA) contribute to the GTP site. S-geranylgeranyl cysteine attachment occurs at residues Cys-205 and Cys-207. At Cys-207 the chain carries Cysteine methyl ester.

It belongs to the small GTPase superfamily. Rab family.

The protein localises to the golgi apparatus membrane. In terms of biological role, protein transport. Regulator of membrane traffic from the Golgi apparatus towards the endoplasmic reticulum (ER). The polypeptide is Ras-related protein RABH1d (RABH1D) (Arabidopsis thaliana (Mouse-ear cress)).